The chain runs to 248 residues: 4-hydroxy-tetrahydrodipicolinate reductase (248 aa).

D28 contacts NAD(+). NADP(+) is bound at residue K29. NAD(+) contacts are provided by residues 78 to 80 and 102 to 105; these read ATT and SYNM. The Proton donor/acceptor role is filled by H134. H135 serves as a coordination point for (S)-2,3,4,5-tetrahydrodipicolinate. K138 functions as the Proton donor in the catalytic mechanism. 144–145 serves as a coordination point for (S)-2,3,4,5-tetrahydrodipicolinate; that stretch reads GT.

It belongs to the DapB family.

It localises to the cytoplasm. It carries out the reaction (S)-2,3,4,5-tetrahydrodipicolinate + NAD(+) + H2O = (2S,4S)-4-hydroxy-2,3,4,5-tetrahydrodipicolinate + NADH + H(+). The enzyme catalyses (S)-2,3,4,5-tetrahydrodipicolinate + NADP(+) + H2O = (2S,4S)-4-hydroxy-2,3,4,5-tetrahydrodipicolinate + NADPH + H(+). It functions in the pathway amino-acid biosynthesis; L-lysine biosynthesis via DAP pathway; (S)-tetrahydrodipicolinate from L-aspartate: step 4/4. Functionally, catalyzes the conversion of 4-hydroxy-tetrahydrodipicolinate (HTPA) to tetrahydrodipicolinate. The polypeptide is 4-hydroxy-tetrahydrodipicolinate reductase (Exiguobacterium sibiricum (strain DSM 17290 / CCUG 55495 / CIP 109462 / JCM 13490 / 255-15)).